A 60-amino-acid polypeptide reads, in one-letter code: Large ribosomal subunit protein uL30 (60 aa).

Belongs to the universal ribosomal protein uL30 family. In terms of assembly, part of the 50S ribosomal subunit.

In Cupriavidus necator (strain ATCC 17699 / DSM 428 / KCTC 22496 / NCIMB 10442 / H16 / Stanier 337) (Ralstonia eutropha), this protein is Large ribosomal subunit protein uL30.